The sequence spans 729 residues: Catalase-peroxidase (729 aa).

The interval 1-20 (MHNGSNGSVEQRDSMPETSR) is disordered. Over residues 10 to 20 (EQRDSMPETSR) the composition is skewed to basic and acidic residues. The segment at residues 91–214 (WHAAGTYRTT…LGATVMGLIY (124 aa)) is a cross-link (tryptophyl-tyrosyl-methioninium (Trp-Tyr) (with M-240)). Histidine 92 acts as the Proton acceptor in catalysis. The tryptophyl-tyrosyl-methioninium (Tyr-Met) (with W-91) cross-link spans 214-240 (YVNPEGPESTPDPEWSAQRIRKSFGRM). Histidine 255 lines the heme b pocket.

This sequence belongs to the peroxidase family. Peroxidase/catalase subfamily. Homodimer or homotetramer. The cofactor is heme b. Post-translationally, formation of the three residue Trp-Tyr-Met cross-link is important for the catalase, but not the peroxidase activity of the enzyme.

It catalyses the reaction H2O2 + AH2 = A + 2 H2O. It carries out the reaction 2 H2O2 = O2 + 2 H2O. Functionally, bifunctional enzyme with both catalase and broad-spectrum peroxidase activity. The chain is Catalase-peroxidase from Salinibacter ruber (strain DSM 13855 / M31).